The sequence spans 456 residues: Phosphomethylpyrimidine synthase (456 aa).

Residues N80, M109, Y139, H175, S195–G197, D236–R239, and E275 contribute to the substrate site. H279 contributes to the Zn(2+) binding site. Position 302 (Y302) interacts with substrate. Position 343 (H343) interacts with Zn(2+). C423, C426, and C431 together coordinate [4Fe-4S] cluster.

Belongs to the ThiC family. [4Fe-4S] cluster serves as cofactor.

It catalyses the reaction 5-amino-1-(5-phospho-beta-D-ribosyl)imidazole + S-adenosyl-L-methionine = 4-amino-2-methyl-5-(phosphooxymethyl)pyrimidine + CO + 5'-deoxyadenosine + formate + L-methionine + 3 H(+). Its pathway is cofactor biosynthesis; thiamine diphosphate biosynthesis. Its function is as follows. Catalyzes the synthesis of the hydroxymethylpyrimidine phosphate (HMP-P) moiety of thiamine from aminoimidazole ribotide (AIR) in a radical S-adenosyl-L-methionine (SAM)-dependent reaction. The protein is Phosphomethylpyrimidine synthase of Prochlorococcus marinus subsp. pastoris (strain CCMP1986 / NIES-2087 / MED4).